Consider the following 325-residue polypeptide: MKYCVLLIMIHLLLVELPQFPEALQGNVYAAAPVVAATDLRLRIRSSYIGRSCKEIRDRYNQHEDGLYYLSTASGTVYQTFCDMTTAGGGWTLVASVHENNVYGKCTMGDRWSSQQGSNPNWPDGDGNWANRATFGTAEGATSDDFKNPGYYDIVAEDISVWHVPNNSPMEHWNLGAILRYHTERSFLSIQGGNLHQLFKLYPVRYNAEASGNTGPVIPIVYDFGDKETTRELYGPNTRNQFEPGFITFRPINNELAAMAICSGVKPTTGGDTEHYCIGGGGHFPEGAPRQCGDFPAFDWNGYGTNTEWSASKQLTEAAVLLFYR.

The N-terminal stretch at 1-23 (MKYCVLLIMIHLLLVELPQFPEA) is a signal peptide. Residues 44–266 (IRSSYIGRSC…AAMAICSGVK (223 aa)) enclose the Fibrinogen C-terminal domain. Residues Cys-53 and Cys-82 are joined by a disulfide bond. Ca(2+) is bound by residues His-98, Glu-99, Asn-101, Gly-104, Gly-109, Asp-110, Asp-145, Glu-274, Glu-286, and Asp-294. Cystine bridges form between Cys-106/Cys-292 and Cys-262/Cys-277. A carbohydrate contacts are provided by residues 274 to 275 (EH) and Glu-286.

In terms of tissue distribution, expressed at high levels in caudal kidney, liver, and swim bladder. Also expressed in gill, spleen, intestine and head kidney. Not detected in heart.

Functionally, may be involved in innate immune surveillance. May specifically recognize carbohydrate chains of pathogens and bacterial components in a calcium-dependent manner. In vitro binds N-acetylglucosamine residues. The protein is Intelectin of Oncorhynchus mykiss (Rainbow trout).